The sequence spans 575 residues: Urease subunit alpha (575 aa).

The Urease domain maps to 137–575 (GGIDCHIHFI…LPMTQRYFLF (439 aa)). Residues His142, His144, and Lys225 each coordinate Ni(2+). Position 225 is an N6-carboxylysine (Lys225). His227 is a binding site for substrate. Residues His254 and His280 each contribute to the Ni(2+) site. His328 (proton donor) is an active-site residue. Asp368 serves as a coordination point for Ni(2+).

The protein belongs to the metallo-dependent hydrolases superfamily. Urease alpha subunit family. As to quaternary structure, heterotrimer of UreA (gamma), UreB (beta) and UreC (alpha) subunits. Three heterotrimers associate to form the active enzyme. Ni cation serves as cofactor. In terms of processing, carboxylation allows a single lysine to coordinate two nickel ions.

It localises to the cytoplasm. The enzyme catalyses urea + 2 H2O + H(+) = hydrogencarbonate + 2 NH4(+). It participates in nitrogen metabolism; urea degradation; CO(2) and NH(3) from urea (urease route): step 1/1. This Methylibium petroleiphilum (strain ATCC BAA-1232 / LMG 22953 / PM1) protein is Urease subunit alpha.